Reading from the N-terminus, the 342-residue chain is Protein pelota homolog (342 aa).

Belongs to the eukaryotic release factor 1 family. Pelota subfamily. Monomer. Requires a divalent metal cation as cofactor.

It is found in the cytoplasm. May function in recognizing stalled ribosomes, interact with stem-loop structures in stalled mRNA molecules, and effect endonucleolytic cleavage of the mRNA. May play a role in the release non-functional ribosomes and degradation of damaged mRNAs. Has endoribonuclease activity. The polypeptide is Protein pelota homolog (Sulfolobus acidocaldarius (strain ATCC 33909 / DSM 639 / JCM 8929 / NBRC 15157 / NCIMB 11770)).